A 61-amino-acid chain; its full sequence is Putative protein RenD (61 aa).

This Escherichia coli (strain K12) protein is Putative protein RenD (renD).